A 600-amino-acid chain; its full sequence is Elongation factor 4 (600 aa).

The tr-type G domain maps to 5 to 187 (KYIRNFSIIA…AIVNKLPPPK (183 aa)). Residues 17-22 (DHGKST) and 134-137 (NKID) each bind GTP.

It belongs to the TRAFAC class translation factor GTPase superfamily. Classic translation factor GTPase family. LepA subfamily.

It is found in the cell inner membrane. It catalyses the reaction GTP + H2O = GDP + phosphate + H(+). Functionally, required for accurate and efficient protein synthesis under certain stress conditions. May act as a fidelity factor of the translation reaction, by catalyzing a one-codon backward translocation of tRNAs on improperly translocated ribosomes. Back-translocation proceeds from a post-translocation (POST) complex to a pre-translocation (PRE) complex, thus giving elongation factor G a second chance to translocate the tRNAs correctly. Binds to ribosomes in a GTP-dependent manner. The protein is Elongation factor 4 of Rickettsia canadensis (strain McKiel).